A 387-amino-acid polypeptide reads, in one-letter code: Probable protein phosphatase 2C 25 (387 aa).

The PPM-type phosphatase domain maps to 52 to 351; that stretch reads EFSFAVVQAN…DDITVVVVYI (300 aa). Positions 83, 84, 283, and 342 each coordinate Mn(2+).

The protein belongs to the PP2C family. Requires Mg(2+) as cofactor. Mn(2+) is required as a cofactor.

The catalysed reaction is O-phospho-L-seryl-[protein] + H2O = L-seryl-[protein] + phosphate. It carries out the reaction O-phospho-L-threonyl-[protein] + H2O = L-threonyl-[protein] + phosphate. This chain is Probable protein phosphatase 2C 25, found in Oryza sativa subsp. japonica (Rice).